The sequence spans 333 residues: GTP 3',8-cyclase (333 aa).

In terms of domain architecture, Radical SAM core spans 7 to 221; that stretch reads KFGRVHDYIR…FEACDAIGFE (215 aa). Arginine 16 provides a ligand contact to GTP. Residues cysteine 23 and cysteine 27 each coordinate [4Fe-4S] cluster. Tyrosine 29 provides a ligand contact to S-adenosyl-L-methionine. A [4Fe-4S] cluster-binding site is contributed by cysteine 30. GTP is bound at residue arginine 66. Glycine 70 is an S-adenosyl-L-methionine binding site. Threonine 97 is a binding site for GTP. Residue serine 121 participates in S-adenosyl-L-methionine binding. Position 158 (lysine 158) interacts with GTP. An S-adenosyl-L-methionine-binding site is contributed by methionine 192. [4Fe-4S] cluster is bound by residues cysteine 257 and cysteine 260. 262–264 provides a ligand contact to GTP; that stretch reads RLR. Residue cysteine 274 participates in [4Fe-4S] cluster binding.

Belongs to the radical SAM superfamily. MoaA family. Monomer and homodimer. [4Fe-4S] cluster serves as cofactor.

The enzyme catalyses GTP + AH2 + S-adenosyl-L-methionine = (8S)-3',8-cyclo-7,8-dihydroguanosine 5'-triphosphate + 5'-deoxyadenosine + L-methionine + A + H(+). Its pathway is cofactor biosynthesis; molybdopterin biosynthesis. Its function is as follows. Catalyzes the cyclization of GTP to (8S)-3',8-cyclo-7,8-dihydroguanosine 5'-triphosphate. The protein is GTP 3',8-cyclase of Listeria welshimeri serovar 6b (strain ATCC 35897 / DSM 20650 / CCUG 15529 / CIP 8149 / NCTC 11857 / SLCC 5334 / V8).